Reading from the N-terminus, the 237-residue chain is RING-H2 finger protein ATL57 (237 aa).

The chain crosses the membrane as a helical span at residues 51-71 (ALTIFILLVALFFMGFFSVYF). An RING-type; atypical zinc finger spans residues 140 to 182 (CVICLSDFEEGETVKVIPHCGHVFHVDCVDTWLSSYVTCPLCR).

It belongs to the RING-type zinc finger family. ATL subfamily.

Its subcellular location is the membrane. It catalyses the reaction S-ubiquitinyl-[E2 ubiquitin-conjugating enzyme]-L-cysteine + [acceptor protein]-L-lysine = [E2 ubiquitin-conjugating enzyme]-L-cysteine + N(6)-ubiquitinyl-[acceptor protein]-L-lysine.. The protein operates within protein modification; protein ubiquitination. In Arabidopsis thaliana (Mouse-ear cress), this protein is RING-H2 finger protein ATL57 (ATL57).